The chain runs to 523 residues: Probable methylmalonate-semialdehyde/malonate-semialdehyde dehydrogenase [acylating], mitochondrial (523 aa).

A mitochondrion-targeting transit peptide spans Met-1–Lys-22. Residues Phe-175, Lys-199, and Glu-202 each coordinate NAD(+). Catalysis depends on Cys-307, which acts as the Nucleophile. Residue Glu-407 coordinates NAD(+).

The protein belongs to the aldehyde dehydrogenase family. In terms of assembly, homodimer.

It localises to the mitochondrion. It carries out the reaction 2-methyl-3-oxopropanoate + NAD(+) + CoA + H2O = propanoyl-CoA + hydrogencarbonate + NADH + H(+). The enzyme catalyses 3-oxopropanoate + NAD(+) + CoA + H2O = hydrogencarbonate + acetyl-CoA + NADH + H(+). Probable malonate and methylmalonate semialdehyde dehydrogenase involved in the catabolism of valine, thymine, and compounds catabolized by way of beta-alanine, including uracil and cytidine. This chain is Probable methylmalonate-semialdehyde/malonate-semialdehyde dehydrogenase [acylating], mitochondrial (alh-8), found in Caenorhabditis elegans.